Reading from the N-terminus, the 161-residue chain is Putative sporulation sigma factor-processing peptidase (161 aa).

The active site involves D38.

Belongs to the peptidase U4 family.

In terms of biological role, probably activates the RNA polymerase sigma-35 factor at the stage II of sporulation. This Bacillus thuringiensis subsp. kurstaki protein is Putative sporulation sigma factor-processing peptidase.